We begin with the raw amino-acid sequence, 234 residues long: MVSFIFTRIILFAAAINGAVALPMNTTEPEDFSILSRSGTPSSTGYSNGYYYSWWTDGAAQATYANGGGGQYSLNWSGNNGNLVGGKGWNPGFNGRVIQYSGTYQPNGNSYLSVYGWTLNPLIEYYIVESYGSYNPSSAAARKGSVNCDGANYDILTTTRYNEPSINGTQTFQQFWSVRNPKKNPGGSISGSVSTGCHFTAWGNLGMNLGSTWNYQIVATEGYQSSGFSSITVA.

An N-terminal signal peptide occupies residues 1–21 (MVSFIFTRIILFAAAINGAVA). 2 N-linked (GlcNAc...) asparagine glycosylation sites follow: asparagine 25 and asparagine 75. A GH11 domain is found at 38 to 234 (SGTPSSTGYS…SSGFSSITVA (197 aa)). Glutamate 124 (nucleophile) is an active-site residue. N-linked (GlcNAc...) asparagine glycosylation occurs at asparagine 167. Glutamate 221 functions as the Proton donor in the catalytic mechanism.

It belongs to the glycosyl hydrolase 11 (cellulase G) family.

The protein localises to the secreted. The enzyme catalyses Endohydrolysis of (1-&gt;4)-beta-D-xylosidic linkages in xylans.. The protein operates within glycan degradation; xylan degradation. In terms of biological role, endo-1,4-beta-xylanase involved in the hydrolysis of xylan, a major structural heterogeneous polysaccharide found in plant biomass representing the second most abundant polysaccharide in the biosphere, after cellulose. This chain is Endo-1,4-beta-xylanase 1 (Xyn1), found in Leucoagaricus gongylophorus (Leaf-cutting ant fungus).